A 343-amino-acid polypeptide reads, in one-letter code: Methionine import ATP-binding protein MetN (343 aa).

The ABC transporter domain maps to 2–241 (ITLSHITKQF…PKTPLAQAFI (240 aa)). Residue 38–45 (GASGAGKS) participates in ATP binding.

It belongs to the ABC transporter superfamily. Methionine importer (TC 3.A.1.24) family. In terms of assembly, the complex is composed of two ATP-binding proteins (MetN), two transmembrane proteins (MetI) and a solute-binding protein (MetQ).

It localises to the cell inner membrane. It carries out the reaction L-methionine(out) + ATP + H2O = L-methionine(in) + ADP + phosphate + H(+). The enzyme catalyses D-methionine(out) + ATP + H2O = D-methionine(in) + ADP + phosphate + H(+). In terms of biological role, part of the ABC transporter complex MetNIQ involved in methionine import. Responsible for energy coupling to the transport system. The sequence is that of Methionine import ATP-binding protein MetN from Sodalis glossinidius (strain morsitans).